A 262-amino-acid polypeptide reads, in one-letter code: Tryptophan synthase alpha chain (262 aa).

Catalysis depends on proton acceptor residues glutamate 52 and aspartate 63.

Belongs to the TrpA family. Tetramer of two alpha and two beta chains.

The enzyme catalyses (1S,2R)-1-C-(indol-3-yl)glycerol 3-phosphate + L-serine = D-glyceraldehyde 3-phosphate + L-tryptophan + H2O. It participates in amino-acid biosynthesis; L-tryptophan biosynthesis; L-tryptophan from chorismate: step 5/5. Its function is as follows. The alpha subunit is responsible for the aldol cleavage of indoleglycerol phosphate to indole and glyceraldehyde 3-phosphate. The protein is Tryptophan synthase alpha chain of Mycobacteroides abscessus (strain ATCC 19977 / DSM 44196 / CCUG 20993 / CIP 104536 / JCM 13569 / NCTC 13031 / TMC 1543 / L948) (Mycobacterium abscessus).